The primary structure comprises 242 residues: tRNA pseudouridine synthase A (242 aa).

Asp51 (nucleophile) is an active-site residue. Tyr107 provides a ligand contact to substrate.

The protein belongs to the tRNA pseudouridine synthase TruA family. As to quaternary structure, homodimer.

The enzyme catalyses uridine(38/39/40) in tRNA = pseudouridine(38/39/40) in tRNA. Functionally, formation of pseudouridine at positions 38, 39 and 40 in the anticodon stem and loop of transfer RNAs. The protein is tRNA pseudouridine synthase A of Helicobacter acinonychis (strain Sheeba).